We begin with the raw amino-acid sequence, 168 residues long: MATRFRSTLLVITLFVLIDWVTKLVVLLQYKDLQILTHPTLYTHSWGRFSFSIAPVFNEGAAFGLFSNYKYFLFLLRIFVILGLLAYLFFKKKSIQSTTQTALVLLCAGAIGNVGDIIFYGHIVDFISFNYKQWAFPTFNVADVLISLGTLLLVYKFYFPTKQTEKKR.

Transmembrane regions (helical) follow at residues Thr-8–Leu-28, Lys-70–Phe-90, and Val-104–Val-124. Active-site residues include Asp-125 and Asp-143. Residues Trp-134–Val-154 traverse the membrane as a helical segment.

The protein belongs to the peptidase A8 family.

Its subcellular location is the cell inner membrane. It catalyses the reaction Release of signal peptides from bacterial membrane prolipoproteins. Hydrolyzes -Xaa-Yaa-Zaa-|-(S,diacylglyceryl)Cys-, in which Xaa is hydrophobic (preferably Leu), and Yaa (Ala or Ser) and Zaa (Gly or Ala) have small, neutral side chains.. Its pathway is protein modification; lipoprotein biosynthesis (signal peptide cleavage). This protein specifically catalyzes the removal of signal peptides from prolipoproteins. The sequence is that of Lipoprotein signal peptidase from Chlamydia pneumoniae (Chlamydophila pneumoniae).